The following is a 141-amino-acid chain: Putative pre-16S rRNA nuclease (141 aa).

The protein belongs to the YqgF nuclease family.

The protein resides in the cytoplasm. Functionally, could be a nuclease involved in processing of the 5'-end of pre-16S rRNA. This Shewanella oneidensis (strain ATCC 700550 / JCM 31522 / CIP 106686 / LMG 19005 / NCIMB 14063 / MR-1) protein is Putative pre-16S rRNA nuclease.